A 231-amino-acid polypeptide reads, in one-letter code: Octanoyltransferase (231 aa).

The BPL/LPL catalytic domain occupies 49 to 227; sequence PHLPEAVWLL…ALAARFHLAW (179 aa). Residues 91–98, 158–160, and 171–173 each bind substrate; these read RGGEVTHH, AIG, and GLA. Catalysis depends on Cys-189, which acts as the Acyl-thioester intermediate.

This sequence belongs to the LipB family.

It localises to the cytoplasm. It catalyses the reaction octanoyl-[ACP] + L-lysyl-[protein] = N(6)-octanoyl-L-lysyl-[protein] + holo-[ACP] + H(+). It participates in protein modification; protein lipoylation via endogenous pathway; protein N(6)-(lipoyl)lysine from octanoyl-[acyl-carrier-protein]: step 1/2. In terms of biological role, catalyzes the transfer of endogenously produced octanoic acid from octanoyl-acyl-carrier-protein onto the lipoyl domains of lipoate-dependent enzymes. Lipoyl-ACP can also act as a substrate although octanoyl-ACP is likely to be the physiological substrate. The protein is Octanoyltransferase of Parasynechococcus marenigrum (strain WH8102).